The primary structure comprises 147 residues: Transcriptional regulator MraZ (147 aa).

SpoVT-AbrB domains follow at residues asparagine 5–glutamate 52 and glycine 81–histidine 124.

It belongs to the MraZ family. Forms oligomers.

Its subcellular location is the cytoplasm. It localises to the nucleoid. In Koribacter versatilis (strain Ellin345), this protein is Transcriptional regulator MraZ.